The following is a 158-amino-acid chain: Transcription elongation factor GreB (158 aa).

Residues 53–75 (KRRLREIDRRVRFLTKRLEVLQI) are a coiled coil.

This sequence belongs to the GreA/GreB family. GreB subfamily.

Functionally, necessary for efficient RNA polymerase transcription elongation past template-encoded arresting sites. The arresting sites in DNA have the property of trapping a certain fraction of elongating RNA polymerases that pass through, resulting in locked ternary complexes. Cleavage of the nascent transcript by cleavage factors such as GreA or GreB allows the resumption of elongation from the new 3'terminus. GreB releases sequences of up to 9 nucleotides in length. The sequence is that of Transcription elongation factor GreB from Pasteurella multocida (strain Pm70).